Consider the following 551-residue polypeptide: Cytochrome c oxidase subunit 1 (551 aa).

The helical transmembrane segment at Val29–Ala49 threads the bilayer. His76 contributes to the Fe(II)-heme a binding site. Transmembrane regions (helical) follow at residues Ile79 to Leu99, Ala113 to Gly133, Leu156 to Val176, Leu205 to Ile225, Leu245 to Ile265, Ile283 to Phe303, Met313 to Trp333, Met348 to Val368, Phe382 to Gly402, Phe424 to Met444, and Ile466 to Leu486. The Cu cation site is built by His251, Tyr255, His300, and His301. The segment at residues His251–Tyr255 is a cross-link (1'-histidyl-3'-tyrosine (His-Tyr)). Residue His386 participates in heme a3 binding. Residue His388 coordinates Fe(II)-heme a.

This sequence belongs to the heme-copper respiratory oxidase family. It depends on Cu(2+) as a cofactor. Requires heme as cofactor.

It localises to the cell membrane. It catalyses the reaction 4 Fe(II)-[cytochrome c] + O2 + 8 H(+)(in) = 4 Fe(III)-[cytochrome c] + 2 H2O + 4 H(+)(out). It participates in energy metabolism; oxidative phosphorylation. Its function is as follows. Cytochrome c oxidase is the component of the respiratory chain that catalyzes the reduction of oxygen to water. Subunits 1-3 form the functional core of the enzyme complex. CO I is the catalytic subunit of the enzyme. Electrons originating in cytochrome c are transferred via the copper A center of subunit 2 and heme A of subunit 1 to the bimetallic center formed by heme A3 and copper B. The chain is Cytochrome c oxidase subunit 1 (ctaD) from Synechocystis sp. (strain ATCC 27184 / PCC 6803 / Kazusa).